The following is a 288-amino-acid chain: Beta-lactamase CARB-3 (288 aa).

The N-terminal stretch at 1 to 17 is a signal peptide; sequence MKFLLAFSLLIPSVVFA. Residue Ser-65 is the Acyl-ester intermediate of the active site. A disulfide bond links Cys-72 and Cys-118. 229–231 provides a ligand contact to substrate; it reads RSG.

This sequence belongs to the class-A beta-lactamase family.

The catalysed reaction is a beta-lactam + H2O = a substituted beta-amino acid. Functionally, hydrolyzes both carbenicillin and oxacillin. The chain is Beta-lactamase CARB-3 (carB3) from Pseudomonas aeruginosa.